Here is a 760-residue protein sequence, read N- to C-terminus: Serine/threonine-protein kinase dkf-1 (760 aa).

2 Phorbol-ester/DAG-type zinc fingers span residues 103–153 (PHVV…GIIV) and 194–244 (PHTL…PSNC). A PH domain is found at 316–444 (KNLEGWMIHF…QFIKESLQPP (129 aa)). A Protein kinase domain is found at 464 to 725 (VLSDKTLGSG…IEKCLEHGWL (262 aa)). ATP-binding positions include 470-478 (LGSGQFGTV) and Lys-493. Asp-589 acts as the Proton acceptor in catalysis. The residue at position 626 (Thr-626) is a Phosphothreonine.

The protein belongs to the protein kinase superfamily. CAMK Ser/Thr protein kinase family. PKD subfamily. Mg(2+) serves as cofactor. Prolonged phosphorylation at Thr-626 results in ubiquitination and degradation.

The protein localises to the cytoplasm. Its subcellular location is the membrane. It carries out the reaction L-seryl-[protein] + ATP = O-phospho-L-seryl-[protein] + ADP + H(+). It catalyses the reaction L-threonyl-[protein] + ATP = O-phospho-L-threonyl-[protein] + ADP + H(+). Its activity is regulated as follows. Activated by DAG and phorbol esters. Phorbol-ester/DAG-type domain 1 binds phorbol ester with high affinity and mediates accumulation at the cell periphery. Phorbol-ester/DAG-type domain 2 binds phorbol ester with low affinity but may mediate initial contact, resulting in a conformational change allowing previously occluded domain 1 to anchor the kinase. Phosphorylation on Thr-626 is then also required for activation and may also result in a further conformational change. Converts transient diacylglycerol (DAG) signals into prolonged physiological effects, independently of PKC. Role in the regulation of growth and neuromuscular control of movement. Involved in immune response to S.aureus bacterium by activating transcription factor hlh-30 downstream of phospholipase plc-1. The polypeptide is Serine/threonine-protein kinase dkf-1 (Caenorhabditis briggsae).